The primary structure comprises 175 residues: Transcriptional regulator GadE (175 aa).

The HTH luxR-type domain occupies 109–174 (HKNSQLCFSH…DIVTLGITSY (66 aa)). The segment at residues 133-152 (ESNITSTLNISQQTLKIQKF) is a DNA-binding region (H-T-H motif).

Regulates the expression of several genes involved in acid resistance. Required for the expression of gadA and gadBC, among others, regardless of media or growth conditions. Binds directly to the 20 bp GAD box found in the control regions of both loci. Could be involved in the regulation of the genes coding for the type III secretion system in enterohaemorragic strains. This chain is Transcriptional regulator GadE (gadE), found in Escherichia coli O157:H7.